The following is a 572-amino-acid chain: MFS-type transporter pydD (572 aa).

Residues 1 to 15 (MLQEDKSSETMHDPS) show a composition bias toward basic and acidic residues. The disordered stretch occupies residues 1-46 (MLQEDKSSETMHDPSTRGVETRNVTAVDSPLETATTSESPETERTN). N-linked (GlcNAc...) asparagine glycosylation occurs at asparagine 23. Positions 29–39 (SPLETATTSES) are enriched in low complexity. The next 8 helical transmembrane spans lie at 56–76 (FWAL…EGTI), 88–108 (LGGG…MTAM), 123–143 (WPML…GGAT), 156–176 (GIGA…VVPL), 185–205 (IVMG…GLIV), 212–232 (WTFY…FSFL), 255–275 (ALFV…GSVY), and 282–302 (VLVP…FEGS). An N-linked (GlcNAc...) asparagine glycan is attached at asparagine 317. The next 6 membrane-spanning stretches (helical) occupy residues 321–341 (VGVM…LYFM), 358–378 (VQIL…GFLM), 386–406 (PIHY…SLLD), 419–439 (IVYS…LLAP), 451–471 (TWSF…AAVF), and 529–549 (WLVS…AREV).

Belongs to the major facilitator superfamily.

It localises to the membrane. MFS-type transporter; part of the gene cluster that mediates the biosynthesis of pyrrocidines, fungal natural products containing a macrocyclic para-cyclophane connected to a decahydrofluorene ring system that show potent antibiotic activities toward Gram-negative bacteria. The polypeptide is MFS-type transporter pydD (Acremonium sp).